The sequence spans 142 residues: Large ribosomal subunit protein uL11 (142 aa).

Belongs to the universal ribosomal protein uL11 family. Part of the ribosomal stalk of the 50S ribosomal subunit. Interacts with L10 and the large rRNA to form the base of the stalk. L10 forms an elongated spine to which L12 dimers bind in a sequential fashion forming a multimeric L10(L12)X complex. One or more lysine residues are methylated.

In terms of biological role, forms part of the ribosomal stalk which helps the ribosome interact with GTP-bound translation factors. This Mycoplasma capricolum subsp. capricolum (strain California kid / ATCC 27343 / NCTC 10154) protein is Large ribosomal subunit protein uL11.